The sequence spans 217 residues: Large ribosomal subunit protein uL4 (217 aa).

The tract at residues 46 to 102 (KRQGTHSAKTRAEVSGGGRKPFRQKGTGRARQGSIRAPHFTGGGISHGPKPRDYSQR) is disordered.

The protein belongs to the universal ribosomal protein uL4 family. Part of the 50S ribosomal subunit.

Functionally, one of the primary rRNA binding proteins, this protein initially binds near the 5'-end of the 23S rRNA. It is important during the early stages of 50S assembly. It makes multiple contacts with different domains of the 23S rRNA in the assembled 50S subunit and ribosome. In terms of biological role, forms part of the polypeptide exit tunnel. In Corynebacterium diphtheriae (strain ATCC 700971 / NCTC 13129 / Biotype gravis), this protein is Large ribosomal subunit protein uL4.